A 273-amino-acid chain; its full sequence is Ribosomal RNA small subunit methyltransferase A (273 aa).

6 residues coordinate S-adenosyl-L-methionine: N18, L20, G45, E66, D91, and N113.

The protein belongs to the class I-like SAM-binding methyltransferase superfamily. rRNA adenine N(6)-methyltransferase family. RsmA subfamily.

It is found in the cytoplasm. The catalysed reaction is adenosine(1518)/adenosine(1519) in 16S rRNA + 4 S-adenosyl-L-methionine = N(6)-dimethyladenosine(1518)/N(6)-dimethyladenosine(1519) in 16S rRNA + 4 S-adenosyl-L-homocysteine + 4 H(+). Specifically dimethylates two adjacent adenosines (A1518 and A1519) in the loop of a conserved hairpin near the 3'-end of 16S rRNA in the 30S particle. May play a critical role in biogenesis of 30S subunits. The sequence is that of Ribosomal RNA small subunit methyltransferase A from Salmonella agona (strain SL483).